The sequence spans 273 residues: 2-dehydro-3-deoxyphosphooctonate aldolase (273 aa).

The protein belongs to the KdsA family.

The protein resides in the cytoplasm. The enzyme catalyses D-arabinose 5-phosphate + phosphoenolpyruvate + H2O = 3-deoxy-alpha-D-manno-2-octulosonate-8-phosphate + phosphate. It participates in carbohydrate biosynthesis; 3-deoxy-D-manno-octulosonate biosynthesis; 3-deoxy-D-manno-octulosonate from D-ribulose 5-phosphate: step 2/3. Its pathway is bacterial outer membrane biogenesis; lipopolysaccharide biosynthesis. The chain is 2-dehydro-3-deoxyphosphooctonate aldolase from Geobacter sp. (strain M21).